The sequence spans 745 residues: Elongation factor G, mitochondrial (745 aa).

Positions 40–317 (ERIRNIGISA…AVLDYLPNPG (278 aa)) constitute a tr-type G domain. Residues 49-56 (AHIDSGKT), 116-120 (DTPGH), and 170-173 (NKLD) contribute to the GTP site.

Belongs to the TRAFAC class translation factor GTPase superfamily. Classic translation factor GTPase family. EF-G/EF-2 subfamily.

The protein resides in the mitochondrion. It functions in the pathway protein biosynthesis; polypeptide chain elongation. Functionally, mitochondrial GTPase that catalyzes the GTP-dependent ribosomal translocation step during translation elongation. During this step, the ribosome changes from the pre-translocational (PRE) to the post-translocational (POST) state as the newly formed A-site-bound peptidyl-tRNA and P-site-bound deacylated tRNA move to the P and E sites, respectively. Catalyzes the coordinated movement of the two tRNA molecules, the mRNA and conformational changes in the ribosome. Essential during development as it acts as a retrograde signal from mitochondria to the nucleus to slow down cell proliferation if mitochondrial energy output is low. This chain is Elongation factor G, mitochondrial, found in Drosophila melanogaster (Fruit fly).